The chain runs to 135 residues: Phosphoribosyl-AMP cyclohydrolase (135 aa).

Residue aspartate 78 coordinates Mg(2+). Cysteine 79 contributes to the Zn(2+) binding site. 2 residues coordinate Mg(2+): aspartate 80 and aspartate 82. Cysteine 96 and cysteine 103 together coordinate Zn(2+).

It belongs to the PRA-CH family. As to quaternary structure, homodimer. The cofactor is Mg(2+). Zn(2+) serves as cofactor.

It is found in the cytoplasm. The enzyme catalyses 1-(5-phospho-beta-D-ribosyl)-5'-AMP + H2O = 1-(5-phospho-beta-D-ribosyl)-5-[(5-phospho-beta-D-ribosylamino)methylideneamino]imidazole-4-carboxamide. It functions in the pathway amino-acid biosynthesis; L-histidine biosynthesis; L-histidine from 5-phospho-alpha-D-ribose 1-diphosphate: step 3/9. Its function is as follows. Catalyzes the hydrolysis of the adenine ring of phosphoribosyl-AMP. The protein is Phosphoribosyl-AMP cyclohydrolase of Cupriavidus metallidurans (strain ATCC 43123 / DSM 2839 / NBRC 102507 / CH34) (Ralstonia metallidurans).